The chain runs to 625 residues: Probable potassium transport system protein Kup 1 (625 aa).

A run of 12 helical transmembrane segments spans residues 14 to 34, 50 to 70, 104 to 124, 139 to 159, 170 to 190, 213 to 233, 249 to 269, 287 to 307, 339 to 359, 368 to 388, 396 to 416, and 421 to 441; these read LSLL…TSPL, AAAV…ITTV, IVAL…ITPA, PALQ…LFAI, LFGP…LVGI, GATG…AEAL, WFAV…ALVI, LLLP…QSVI, IYVG…TIGF, AYGI…FIAM, LLAA…FFLA, and IAEG…LMWI.

The protein belongs to the HAK/KUP transporter (TC 2.A.72) family.

It is found in the cell inner membrane. It catalyses the reaction K(+)(in) + H(+)(in) = K(+)(out) + H(+)(out). In terms of biological role, transport of potassium into the cell. Likely operates as a K(+):H(+) symporter. In Bradyrhizobium sp. (strain ORS 278), this protein is Probable potassium transport system protein Kup 1.